A 32-amino-acid chain; its full sequence is Delta-actitoxin-Eqd1a (32 aa).

This sequence belongs to the sea anemone short toxin (type III) family. In terms of processing, contains 4 disulfide bonds.

It is found in the secreted. The protein resides in the nematocyst. Its function is as follows. Binds specifically to sodium channels (Nav) of the axonal membrane of crayfish and prolongs the falling phase of the action potential. It also increases the maximum rates of rise of both action potential and resting potential. Is only active on crustaceans. The sequence is that of Delta-actitoxin-Eqd1a from Entacmaea quadricolor (Bubble-tip anemone).